A 134-amino-acid polypeptide reads, in one-letter code: Small ribosomal subunit protein uS9 (134 aa).

The disordered stretch occupies residues 113–134 (REVERKKYGLKKARRAPQFSKR). Positions 120–134 (YGLKKARRAPQFSKR) are enriched in basic residues.

Belongs to the universal ribosomal protein uS9 family.

The chain is Small ribosomal subunit protein uS9 from Thermotoga petrophila (strain ATCC BAA-488 / DSM 13995 / JCM 10881 / RKU-1).